A 342-amino-acid polypeptide reads, in one-letter code: Thioredoxin reductase 2, mitochondrial (342 aa).

The transit peptide at methionine 1 to arginine 23 directs the protein to the mitochondrion. FAD is bound by residues serine 34–alanine 37, glutamate 56–glutamine 68, isoleucine 63–alanine 64, glutamine 68, asparagine 77, valine 110, cysteine 168, aspartate 311, aspartate 311–alanine 320, and arginine 318–alanine 320. A disulfide bridge links cysteine 165 with cysteine 168.

The protein belongs to the class-II pyridine nucleotide-disulfide oxidoreductase family. Homodimer. FAD is required as a cofactor.

It is found in the mitochondrion. The catalysed reaction is [thioredoxin]-dithiol + NADP(+) = [thioredoxin]-disulfide + NADPH + H(+). Functionally, acts on mitochondrial thioredoxin 3. Implicated in the defense against oxidative stress. The protein is Thioredoxin reductase 2, mitochondrial of Saccharomyces cerevisiae (strain ATCC 204508 / S288c) (Baker's yeast).